We begin with the raw amino-acid sequence, 212 residues long: Sclerostin (212 aa).

The signal sequence occupies residues 1 to 23 (MQLSLALCLVCLLVHAAFRVVEG). Asparagine 52 is a glycosylation site (N-linked (GlcNAc...) asparagine). Disulfide bonds link cysteine 79–cysteine 133, cysteine 93–cysteine 147, cysteine 104–cysteine 164, and cysteine 108–cysteine 166. Positions 81–171 (ELHFTRYVTD…ASCKCKRLTR (91 aa)) constitute a CTCK domain. N-linked (GlcNAc...) asparagine glycosylation is present at asparagine 174. A disordered region spans residues 179–212 (KDFGPEAARPQTGRKLRPRARGTKASRAELENAY). Basic residues predominate over residues 190–202 (TGRKLRPRARGTK).

The protein belongs to the sclerostin family. In terms of assembly, interacts with LRP4 (via the extracellular domain); the interaction facilitates the inhibition of Wnt signaling. Interacts with LRP5 (via the first two YWTD-EGF repeat domains); the interaction inhibits Wnt-mediated signaling. Interacts with LRP6.

Its subcellular location is the secreted. The protein resides in the extracellular space. It localises to the extracellular matrix. Negative regulator of bone growth that acts through inhibition of Wnt signaling and bone formation. This is Sclerostin from Bos taurus (Bovine).